The primary structure comprises 61 residues: Translational regulator CsrA (61 aa).

It belongs to the CsrA/RsmA family. In terms of assembly, homodimer; the beta-strands of each monomer intercalate to form a hydrophobic core, while the alpha-helices form wings that extend away from the core.

Its subcellular location is the cytoplasm. A key translational regulator that binds mRNA to regulate translation initiation and/or mRNA stability. Mediates global changes in gene expression, shifting from rapid growth to stress survival by linking envelope stress, the stringent response and the catabolite repression systems. Usually binds in the 5'-UTR; binding at or near the Shine-Dalgarno sequence prevents ribosome-binding, repressing translation, binding elsewhere in the 5'-UTR can activate translation and/or stabilize the mRNA. Its function is antagonized by small RNA(s). This chain is Translational regulator CsrA, found in Glaesserella parasuis serovar 5 (strain SH0165) (Haemophilus parasuis).